The primary structure comprises 605 residues: Adenine deaminase (605 aa).

It belongs to the metallo-dependent hydrolases superfamily. Adenine deaminase family. The cofactor is Mn(2+).

It carries out the reaction adenine + H2O + H(+) = hypoxanthine + NH4(+). The sequence is that of Adenine deaminase from Mesorhizobium japonicum (strain LMG 29417 / CECT 9101 / MAFF 303099) (Mesorhizobium loti (strain MAFF 303099)).